The primary structure comprises 342 residues: Trans-3-hydroxy-L-proline dehydratase (342 aa).

The Proton acceptor role is filled by serine 90. Substrate is bound by residues 91 to 92, aspartate 251, and 256 to 257; these read GS and GT.

It belongs to the proline racemase family.

The catalysed reaction is trans-3-hydroxy-L-proline = 1-pyrroline-2-carboxylate + H2O. Its function is as follows. Catalyzes the dehydration of trans-3-hydroxy-L-proline (t3LHyp) to Delta(1)-pyrroline-2-carboxylate (Pyr2C). Is likely involved in a degradation pathway that converts t3LHyp to L-proline, which would allow P.denitrificans to grow on t3LHyp as a sole carbon source. Displays neither proline racemase activity nor 4-hydroxyproline 2-epimerase activity. In Paracoccus denitrificans (strain Pd 1222), this protein is Trans-3-hydroxy-L-proline dehydratase.